The following is a 496-amino-acid chain: Lysosomal Pro-X carboxypeptidase (496 aa).

The N-terminal stretch at 1 to 21 is a signal peptide; sequence MGRRALLLLLLSFLAPWTTIA. Residues 22–45 constitute a propeptide that is removed on maturation; the sequence is LRPALRALGSLHLPTNPTSLPAVA. N-linked (GlcNAc...) asparagine glycans are attached at residues N47 and N101. Residue S179 is the Charge relay system of the active site. Residues 194–334 are SKS domain; the sequence is HMVVGALAAS…QNIFQALNVY (141 aa). 4 disulfides stabilise this stretch: C215–C372, C233–C310, C264–C343, and C364–C394. Residues N317, N336, and N345 are each glycosylated (N-linked (GlcNAc...) asparagine). A glycan (N-linked (GlcNAc...) asparagine) is linked at N415. Residues D430 and H455 each act as charge relay system in the active site.

It belongs to the peptidase S28 family. As to quaternary structure, homodimer.

Its subcellular location is the lysosome. The enzyme catalyses Cleavage of a -Pro-|-Xaa bond to release a C-terminal amino acid.. Functionally, cleaves C-terminal amino acids linked to proline in peptides such as angiotensin II, III and des-Arg9-bradykinin. This cleavage occurs at acidic pH, but enzymatic activity is retained with some substrates at neutral pH. This is Lysosomal Pro-X carboxypeptidase (PRCP) from Pongo abelii (Sumatran orangutan).